Here is a 197-residue protein sequence, read N- to C-terminus: Holliday junction branch migration complex subunit RuvA (197 aa).

A domain I region spans residues 1 to 64 (MIGRLRGIVA…EDSVSLYGFL (64 aa)). The interval 65-143 (REGERRLFRD…QFGAGGALPT (79 aa)) is domain II. The flexible linker stretch occupies residues 144–153 (GSGPAPADPL). The domain III stretch occupies residues 153-197 (LSDATVALQQLGYKPAEAARMARDAFNEGDEVATVIRKALQSALR).

This sequence belongs to the RuvA family. Homotetramer. Forms an RuvA(8)-RuvB(12)-Holliday junction (HJ) complex. HJ DNA is sandwiched between 2 RuvA tetramers; dsDNA enters through RuvA and exits via RuvB. An RuvB hexamer assembles on each DNA strand where it exits the tetramer. Each RuvB hexamer is contacted by two RuvA subunits (via domain III) on 2 adjacent RuvB subunits; this complex drives branch migration. In the full resolvosome a probable DNA-RuvA(4)-RuvB(12)-RuvC(2) complex forms which resolves the HJ.

It localises to the cytoplasm. In terms of biological role, the RuvA-RuvB-RuvC complex processes Holliday junction (HJ) DNA during genetic recombination and DNA repair, while the RuvA-RuvB complex plays an important role in the rescue of blocked DNA replication forks via replication fork reversal (RFR). RuvA specifically binds to HJ cruciform DNA, conferring on it an open structure. The RuvB hexamer acts as an ATP-dependent pump, pulling dsDNA into and through the RuvAB complex. HJ branch migration allows RuvC to scan DNA until it finds its consensus sequence, where it cleaves and resolves the cruciform DNA. In Stenotrophomonas maltophilia (strain K279a), this protein is Holliday junction branch migration complex subunit RuvA.